Reading from the N-terminus, the 347-residue chain is UDP-3-O-acylglucosamine N-acyltransferase (347 aa).

The active-site Proton acceptor is His-248.

Belongs to the transferase hexapeptide repeat family. LpxD subfamily. As to quaternary structure, homotrimer.

It carries out the reaction a UDP-3-O-[(3R)-3-hydroxyacyl]-alpha-D-glucosamine + a (3R)-hydroxyacyl-[ACP] = a UDP-2-N,3-O-bis[(3R)-3-hydroxyacyl]-alpha-D-glucosamine + holo-[ACP] + H(+). The protein operates within bacterial outer membrane biogenesis; LPS lipid A biosynthesis. In terms of biological role, catalyzes the N-acylation of UDP-3-O-acylglucosamine using 3-hydroxyacyl-ACP as the acyl donor. Is involved in the biosynthesis of lipid A, a phosphorylated glycolipid that anchors the lipopolysaccharide to the outer membrane of the cell. This chain is UDP-3-O-acylglucosamine N-acyltransferase, found in Synechococcus sp. (strain CC9902).